We begin with the raw amino-acid sequence, 520 residues long: Leucine carboxyl methyltransferase 1 (520 aa).

2 disordered regions span residues 1 to 116 (MQRD…DDAV) and 142 to 174 (TQEF…SIRR). Residues 79–89 (PSLRLSLGLPR) show a composition bias toward low complexity. Polar residues-rich tracts occupy residues 95 to 110 (HSGQ…STAR) and 142 to 151 (TQEFSSTLPS). S-adenosyl-L-methionine contacts are provided by residues Arg-185, Gly-210, Asp-237, 305-306 (DV), and Glu-343.

The protein belongs to the methyltransferase superfamily. LCMT family.

The enzyme catalyses [phosphatase 2A protein]-C-terminal L-leucine + S-adenosyl-L-methionine = [phosphatase 2A protein]-C-terminal L-leucine methyl ester + S-adenosyl-L-homocysteine. In terms of biological role, methylates the carboxyl group of the C-terminal leucine residue of protein phosphatase 2A catalytic subunits to form alpha-leucine ester residues. This chain is Leucine carboxyl methyltransferase 1 (PPM1), found in Mycosarcoma maydis (Corn smut fungus).